Reading from the N-terminus, the 986-residue chain is Ephrin type-A receptor 4-A (986 aa).

A signal peptide spans 1 to 20 (MAGIVHGILFCGLFGLCWAV). The Extracellular portion of the chain corresponds to 21–547 (TGSRIYPASE…MIGEGASPTV (527 aa)). Residues 30 to 209 (EVTLLDSRSV…FYKKCPLTVR (180 aa)) form the Eph LBD domain. 2 Fibronectin type-III domains span residues 328 to 438 (PPSA…TNQA) and 439 to 536 (APST…TVPS). Asparagine 340 and asparagine 407 each carry an N-linked (GlcNAc...) asparagine glycan. The chain crosses the membrane as a helical span at residues 548 to 569 (LLVSVAGSIVLVVILIAAFVIS). Over 570–986 (RRRSKYSKAK…QQIQGRMVPV (417 aa)) the chain is Cytoplasmic. Phosphotyrosine; by autocatalysis occurs at positions 595 and 601. The Protein kinase domain occupies 620–881 (IKIEKVIGVG…QIVSMLDKLI (262 aa)). ATP contacts are provided by residues 626–634 (IGVGEFGEV) and lysine 652. Aspartate 745 functions as the Proton acceptor in the catalytic mechanism. Phosphotyrosine; by autocatalysis is present on residues tyrosine 778 and tyrosine 928. In terms of domain architecture, SAM spans 911-975 (SQVASVLDWL…LSSVQGMRTQ (65 aa)). The PDZ-binding motif lies at 984–986 (VPV).

This sequence belongs to the protein kinase superfamily. Tyr protein kinase family. Ephrin receptor subfamily.

Its subcellular location is the cell membrane. It is found in the early endosome. It catalyses the reaction L-tyrosyl-[protein] + ATP = O-phospho-L-tyrosyl-[protein] + ADP + H(+). Receptor tyrosine kinase which binds membrane-bound ephrin family ligands residing on adjacent cells, leading to contact-dependent bidirectional signaling into neighboring cells. The signaling pathway downstream of the receptor is referred to as forward signaling while the signaling pathway downstream of the ephrin ligand is referred to as reverse signaling. Highly promiscuous, it has the unique property among Eph receptors to bind and to be physiologically activated by both GPI-anchored ephrin-A and transmembrane ephrin-B ligands including EFNA1 and EFNB3. Upon activation by ephrin ligands, modulates cell morphology and integrin-dependent cell adhesion through regulation of the Rac, Rap and Rho GTPases activity. Plays an important role in the development of the nervous system controlling different steps of axonal guidance including the establishment of the corticospinal projections. The sequence is that of Ephrin type-A receptor 4-A (epha4-a) from Xenopus laevis (African clawed frog).